We begin with the raw amino-acid sequence, 490 residues long: JNK-interacting protein 1 (490 aa).

Disordered regions lie at residues 1–71 and 213–254; these read MADS…DHEP and EDSS…PVSQ. Residues 231–249 are compositionally biased toward polar residues; that stretch reads GHSTAHSPNDFKSMSPQIT. An SH3 domain is found at 271–332; the sequence is MLEATHRGLH…PSAYAVDLDY (62 aa). The 136-residue stretch at 344–479 folds into the PID domain; it reads KERYLLGYLG…FQRFYQKFIE (136 aa).

The protein belongs to the JIP scaffold family. As to quaternary structure, forms homo- and heterooligomeric complexes. Binds Hep, a dual specificity protein kinase in the JNK pathway, but not its downstream target bsk. The C-terminal region interacts with the kinesin light chain protein, Klc, and the C-terminal PTY motif of amyloid-beta protein precursor-like protein, Appl. Expressed in the brain, CNS, PNS and cells posterior to the morphogenetic furrow in the eye imaginal disk of late embryos.

Its subcellular location is the cytoplasm. In terms of biological role, the JNK-interacting protein (JIP) group of scaffold proteins selectively mediates JNK signaling by aggregating specific components of the MAPK cascade to form a functional JNK signaling module. May function as a regulator of vesicle transport, through interactions with the JNK-signaling components and motor proteins. The protein is JNK-interacting protein 1 (Aplip1) of Drosophila melanogaster (Fruit fly).